The chain runs to 339 residues: Heat-inducible transcription repressor HrcA (339 aa).

Belongs to the HrcA family.

Negative regulator of class I heat shock genes (grpE-dnaK-dnaJ and groELS operons). Prevents heat-shock induction of these operons. In Paraburkholderia xenovorans (strain LB400), this protein is Heat-inducible transcription repressor HrcA.